Reading from the N-terminus, the 378-residue chain is MMSIASGPSHAAYTWTAQGGGFGNQTVVDKVPPEMLHLVDAHWYQFPPMNPLWHAILGFVIGILGMISVIGNGMVIYIFTTTKSLRTPSNLLVINLAISDFLMMLSMSPAMVINCYYETWVLGPLVCELYGLTGSLFGCGSIWTMTMIAFDRYNVIVKGLSAKPMTINGALLRILGIWFFSLGWTIAPMFGWNRYVPEGNMTACGTDYLTKDLLSRSYILVYSFFCYFLPLFLIIYSYFFIIQAVAAHEKNMREQAKKMNVASLRSAENQSTSAECKLAKVALMTISLWFMAWTPYLVINYAGIFETVKINPLFTIWGSLFAKANAVYNPIVYGISHPKYRAALFQRFPSLACSSGPAGADTLSTTTTVTEGTEKPAA.

Topologically, residues 1 to 53 (MMSIASGPSHAAYTWTAQGGGFGNQTVVDKVPPEMLHLVDAHWYQFPPMNPLW) are extracellular. N24 carries an N-linked (GlcNAc...) asparagine glycan. A helical membrane pass occupies residues 54-78 (HAILGFVIGILGMISVIGNGMVIYI). Residues 79 to 90 (FTTTKSLRTPSN) are Cytoplasmic-facing. A helical transmembrane segment spans residues 91–115 (LLVINLAISDFLMMLSMSPAMVINC). At 116–130 (YYETWVLGPLVCELY) the chain is on the extracellular side. A disulfide bond links C127 and C204. The helical transmembrane segment at 131 to 150 (GLTGSLFGCGSIWTMTMIAF) threads the bilayer. The Cytoplasmic segment spans residues 151-169 (DRYNVIVKGLSAKPMTING). A helical transmembrane segment spans residues 170 to 193 (ALLRILGIWFFSLGWTIAPMFGWN). At 194–217 (RYVPEGNMTACGTDYLTKDLLSRS) the chain is on the extracellular side. The N-linked (GlcNAc...) asparagine glycan is linked to N200. A helical membrane pass occupies residues 218–245 (YILVYSFFCYFLPLFLIIYSYFFIIQAV). The Cytoplasmic portion of the chain corresponds to 246–280 (AAHEKNMREQAKKMNVASLRSAENQSTSAECKLAK). Residues 281 to 304 (VALMTISLWFMAWTPYLVINYAGI) traverse the membrane as a helical segment. At 305 to 311 (FETVKIN) the chain is on the extracellular side. The helical transmembrane segment at 312 to 336 (PLFTIWGSLFAKANAVYNPIVYGIS) threads the bilayer. K323 is modified (N6-(retinylidene)lysine). The Cytoplasmic portion of the chain corresponds to 337-378 (HPKYRAALFQRFPSLACSSGPAGADTLSTTTTVTEGTEKPAA). Residues 356 to 378 (GPAGADTLSTTTTVTEGTEKPAA) form a disordered region. Low complexity predominate over residues 362–371 (TLSTTTTVTE).

This sequence belongs to the G-protein coupled receptor 1 family. Opsin subfamily. Post-translationally, phosphorylated on some or all of the serine and threonine residues present in the C-terminal region.

It is found in the membrane. In terms of biological role, visual pigments are the light-absorbing molecules that mediate vision. They consist of an apoprotein, opsin, covalently linked to cis-retinal. In Cataglyphis bombycina (Saharan silver ant), this protein is Rhodopsin.